The sequence spans 430 residues: Acetyl-CoA acetyltransferase FG05087, mitochondrial (430 aa).

The N-terminal 32 residues, 1 to 32, are a transit peptide targeting the mitochondrion; that stretch reads MTVTQLRSAGRLAQLAGHVNGARQFSTRPALR. Cys122 acts as the Acyl-thioester intermediate in catalysis. A K(+)-binding site is contributed by Tyr217. Position 260 (Lys260) interacts with CoA. Position 278 (Ala278) interacts with K(+). Ser282 provides a ligand contact to CoA. Residues His385 and Cys413 each act as proton acceptor in the active site. Position 414 (Asn414) interacts with chloride.

It belongs to the thiolase-like superfamily. Thiolase family. Homotetramer. The cofactor is K(+).

The protein resides in the mitochondrion. The enzyme catalyses 2 acetyl-CoA = acetoacetyl-CoA + CoA. In terms of biological role, mitochondrial acetyl-CoA acetyltransferase that catalyzes both the formation and degradation of acetoacetyl-CoA. Seems not to be involved in ergosterol biosynthesis. Plays an important role in growth, morphogenesis and maintaining mitochondrial function including the response to oxidative stresses. This Gibberella zeae (strain ATCC MYA-4620 / CBS 123657 / FGSC 9075 / NRRL 31084 / PH-1) (Wheat head blight fungus) protein is Acetyl-CoA acetyltransferase FG05087, mitochondrial.